Reading from the N-terminus, the 650-residue chain is Acetyl-coenzyme A synthetase (650 aa).

Residues 191–194, Thr311, and Asn335 contribute to the CoA site; that span reads RGGR. Residues 387–389, 411–416, Asp500, and Arg515 contribute to the ATP site; these read GEP and DTWWQT. Ser523 contributes to the CoA binding site. An ATP-binding site is contributed by Arg526. The Mg(2+) site is built by Val537, His539, and Val542. A CoA-binding site is contributed by Arg584. Lys609 is subject to N6-acetyllysine.

Belongs to the ATP-dependent AMP-binding enzyme family. Requires Mg(2+) as cofactor. In terms of processing, acetylated. Deacetylation by the SIR2-homolog deacetylase activates the enzyme.

The enzyme catalyses acetate + ATP + CoA = acetyl-CoA + AMP + diphosphate. Functionally, catalyzes the conversion of acetate into acetyl-CoA (AcCoA), an essential intermediate at the junction of anabolic and catabolic pathways. AcsA undergoes a two-step reaction. In the first half reaction, AcsA combines acetate with ATP to form acetyl-adenylate (AcAMP) intermediate. In the second half reaction, it can then transfer the acetyl group from AcAMP to the sulfhydryl group of CoA, forming the product AcCoA. In Shewanella amazonensis (strain ATCC BAA-1098 / SB2B), this protein is Acetyl-coenzyme A synthetase.